A 217-amino-acid chain; its full sequence is 3,4-dihydroxy-2-butanone 4-phosphate synthase (217 aa).

Residues 37-38 (RE), Asp-42, 150-154 (RGGHT), and Glu-174 contribute to the D-ribulose 5-phosphate site. Glu-38 is a Mg(2+) binding site. His-153 is a binding site for Mg(2+).

Belongs to the DHBP synthase family. As to quaternary structure, homodimer. The cofactor is Mg(2+). Mn(2+) serves as cofactor.

It carries out the reaction D-ribulose 5-phosphate = (2S)-2-hydroxy-3-oxobutyl phosphate + formate + H(+). Its pathway is cofactor biosynthesis; riboflavin biosynthesis; 2-hydroxy-3-oxobutyl phosphate from D-ribulose 5-phosphate: step 1/1. Its function is as follows. Catalyzes the conversion of D-ribulose 5-phosphate to formate and 3,4-dihydroxy-2-butanone 4-phosphate. The protein is 3,4-dihydroxy-2-butanone 4-phosphate synthase of Cronobacter sakazakii (strain ATCC BAA-894) (Enterobacter sakazakii).